Here is a 155-residue protein sequence, read N- to C-terminus: Xanthine-guanine phosphoribosyltransferase (155 aa).

5-phospho-alpha-D-ribose 1-diphosphate contacts are provided by residues 37 to 38 (RG), Arg-69, and 90 to 98 (EDLVDTGTT). A GMP-binding site is contributed by Arg-69. A Mg(2+)-binding site is contributed by Asp-91. 2 residues coordinate guanine: Asp-94 and Ile-137. Positions 94 and 137 each coordinate xanthine. GMP-binding positions include 94 to 98 (DTGTT) and 136 to 137 (WI).

It belongs to the purine/pyrimidine phosphoribosyltransferase family. XGPT subfamily. Homotetramer. Mg(2+) serves as cofactor.

Its subcellular location is the cell inner membrane. The catalysed reaction is GMP + diphosphate = guanine + 5-phospho-alpha-D-ribose 1-diphosphate. It carries out the reaction XMP + diphosphate = xanthine + 5-phospho-alpha-D-ribose 1-diphosphate. It catalyses the reaction IMP + diphosphate = hypoxanthine + 5-phospho-alpha-D-ribose 1-diphosphate. It participates in purine metabolism; GMP biosynthesis via salvage pathway; GMP from guanine: step 1/1. It functions in the pathway purine metabolism; XMP biosynthesis via salvage pathway; XMP from xanthine: step 1/1. Functionally, purine salvage pathway enzyme that catalyzes the transfer of the ribosyl-5-phosphate group from 5-phospho-alpha-D-ribose 1-diphosphate (PRPP) to the N9 position of the 6-oxopurines guanine and xanthine to form the corresponding ribonucleotides GMP (guanosine 5'-monophosphate) and XMP (xanthosine 5'-monophosphate), with the release of PPi. To a lesser extent, also acts on hypoxanthine. The chain is Xanthine-guanine phosphoribosyltransferase from Aeromonas hydrophila subsp. hydrophila (strain ATCC 7966 / DSM 30187 / BCRC 13018 / CCUG 14551 / JCM 1027 / KCTC 2358 / NCIMB 9240 / NCTC 8049).